A 123-amino-acid polypeptide reads, in one-letter code: Alpha-lactalbumin (123 aa).

Residues 1–123 (KQFTKCELSQ…KLEQWLCEEL (123 aa)) enclose the C-type lysozyme domain. 4 disulfide bridges follow: Cys6–Cys120, Cys28–Cys111, Cys61–Cys77, and Cys73–Cys91. 5 residues coordinate Ca(2+): Lys79, Asp82, Asp84, Asp87, and Asp88.

This sequence belongs to the glycosyl hydrolase 22 family. Lactose synthase (LS) is a heterodimer of a catalytic component, beta1,4-galactosyltransferase (beta4Gal-T1) and a regulatory component, alpha-lactalbumin (LA). Mammary gland specific. Secreted in milk.

It is found in the secreted. Its function is as follows. Regulatory subunit of lactose synthase, changes the substrate specificity of galactosyltransferase in the mammary gland making glucose a good acceptor substrate for this enzyme. This enables LS to synthesize lactose, the major carbohydrate component of milk. In other tissues, galactosyltransferase transfers galactose onto the N-acetylglucosamine of the oligosaccharide chains in glycoproteins. This chain is Alpha-lactalbumin (LALBA), found in Equus asinus (Donkey).